We begin with the raw amino-acid sequence, 389 residues long: S-adenosylmethionine synthase (389 aa).

Position 17 (His17) interacts with ATP. Asp19 is a binding site for Mg(2+). Glu45 provides a ligand contact to K(+). Residues Glu58 and Gln101 each contribute to the L-methionine site. Residues 101–111 (QSPDISQGVDG) form a flexible loop region. ATP is bound by residues 170–172 (DSK), 237–238 (RF), Asp246, 252–253 (RK), Ala269, and Lys273. Residue Asp246 participates in L-methionine binding. Lys277 serves as a coordination point for L-methionine.

It belongs to the AdoMet synthase family. In terms of assembly, homotetramer; dimer of dimers. The cofactor is Mg(2+). It depends on K(+) as a cofactor.

The protein resides in the cytoplasm. The catalysed reaction is L-methionine + ATP + H2O = S-adenosyl-L-methionine + phosphate + diphosphate. It functions in the pathway amino-acid biosynthesis; S-adenosyl-L-methionine biosynthesis; S-adenosyl-L-methionine from L-methionine: step 1/1. Its function is as follows. Catalyzes the formation of S-adenosylmethionine (AdoMet) from methionine and ATP. The overall synthetic reaction is composed of two sequential steps, AdoMet formation and the subsequent tripolyphosphate hydrolysis which occurs prior to release of AdoMet from the enzyme. The protein is S-adenosylmethionine synthase of Treponema denticola (strain ATCC 35405 / DSM 14222 / CIP 103919 / JCM 8153 / KCTC 15104).